A 1331-amino-acid polypeptide reads, in one-letter code: Receptor-type adenylate cyclase B (1331 aa).

Over methionine 1 to arginine 33 the chain is Cytoplasmic. Residues leucine 34–valine 54 form a helical membrane-spanning segment. Topologically, residues proline 55–glycine 898 are extracellular. Asparagine 255, asparagine 429, asparagine 558, asparagine 574, and asparagine 657 each carry an N-linked (GlcNAc...) asparagine glycan. Residues glycine 899–leucine 919 traverse the membrane as a helical segment. At tyrosine 920 to histidine 1331 the chain is on the cytoplasmic side. One can recognise a Guanylate cyclase domain in the interval threonine 940–glutamate 1094. Positions 945 and 988 each coordinate Mg(2+).

The protein belongs to the adenylyl cyclase class-3 family. Mg(2+) is required as a cofactor.

The protein localises to the membrane. It carries out the reaction ATP = 3',5'-cyclic AMP + diphosphate. Its function is as follows. Could act as a receptor for an unknown ligand. The chain is Receptor-type adenylate cyclase B (RAC-B) from Leishmania donovani.